Consider the following 623-residue polypeptide: mRNA-capping enzyme (623 aa).

Residues 13–224 (MGLPDRWLHC…IDNGRPSTSQ (212 aa)) are TPase. Residues 44–196 (YDNQIAERRY…YDPTEDDKIL (153 aa)) form the Tyrosine-protein phosphatase domain. The active-site Phosphocysteine intermediate is cysteine 136. Positions 213 to 229 (TQIDNGRPSTSQQIPAT) are enriched in polar residues. The interval 213–243 (TQIDNGRPSTSQQIPATNGNNNQNGNQLSGG) is disordered. Residues 230 to 239 (NGNNNQNGNQ) show a composition bias toward low complexity. Residues 241 to 585 (SGGGDNSKLF…NPVTETYLIE (345 aa)) form a GTase region. The active-site N6-GMP-lysine intermediate is the lysine 311. Residues arginine 316, arginine 331, 357–359 (DTE), 477–479 (KWK), and 553–558 (RERTDK) each bind GTP. Positions 603–623 (HHQIHQQQLHEGEPEARRQKL) are disordered. Basic and acidic residues predominate over residues 610-623 (QLHEGEPEARRQKL).

It in the N-terminal section; belongs to the non-receptor class of the protein-tyrosine phosphatase family. This sequence in the C-terminal section; belongs to the eukaryotic GTase family.

The protein resides in the nucleus. The catalysed reaction is a 5'-end triphospho-ribonucleoside in mRNA + H2O = a 5'-end diphospho-ribonucleoside in mRNA + phosphate + H(+). The enzyme catalyses a 5'-end diphospho-ribonucleoside in mRNA + GTP + H(+) = a 5'-end (5'-triphosphoguanosine)-ribonucleoside in mRNA + diphosphate. Its activity is regulated as follows. RNA triphosphatase activity is inhibited by magnesium. Functionally, bifunctional mRNA-capping enzyme exhibiting RNA 5'-triphosphate monophosphatase activity in the N-terminal part and mRNA guanylyltransferase activity in the C-terminal part. Catalyzes the first two steps of cap formation: by removing the gamma-phosphate from the 5'-triphosphate end of nascent mRNA to yield a diphosphate end, and by transferring the GMP moiety of GTP to the 5'-diphosphate terminus via a covalent enzyme-GMP reaction intermediate. The sequence is that of mRNA-capping enzyme (cel-1) from Caenorhabditis elegans.